Consider the following 245-residue polypeptide: 1-(5-phosphoribosyl)-5-[(5-phosphoribosylamino)methylideneamino] imidazole-4-carboxamide isomerase (245 aa).

Catalysis depends on D8, which acts as the Proton acceptor. The Proton donor role is filled by D130.

The protein belongs to the HisA/HisF family.

The protein resides in the cytoplasm. It carries out the reaction 1-(5-phospho-beta-D-ribosyl)-5-[(5-phospho-beta-D-ribosylamino)methylideneamino]imidazole-4-carboxamide = 5-[(5-phospho-1-deoxy-D-ribulos-1-ylimino)methylamino]-1-(5-phospho-beta-D-ribosyl)imidazole-4-carboxamide. It functions in the pathway amino-acid biosynthesis; L-histidine biosynthesis; L-histidine from 5-phospho-alpha-D-ribose 1-diphosphate: step 4/9. The chain is 1-(5-phosphoribosyl)-5-[(5-phosphoribosylamino)methylideneamino] imidazole-4-carboxamide isomerase from Ectopseudomonas mendocina (strain ymp) (Pseudomonas mendocina).